The sequence spans 739 residues: Vascular cell adhesion protein 1 (739 aa).

The signal sequence occupies residues 1 to 24 (MPVKMVAIFGASTVLWILFAVSQA). Ig-like C2-type domains are found at residues 25–111 (FKIE…IQVD), 119–212 (PEIQ…KERE), 223–309 (PKNT…LIVQ), 312–397 (PFTV…KTIQ), 408–506 (EIEI…QTLY), 514–595 (PTIW…VELI), and 601–682 (KDIQ…RSLT). The Extracellular portion of the chain corresponds to 25–698 (FKIEISPEYK…ENNKDYFSPE (674 aa)). 5 cysteine pairs are disulfide-bonded: Cys47/Cys95, Cys52/Cys99, Cys137/Cys195, Cys246/Cys291, and Cys335/Cys383. Asn273 carries N-linked (GlcNAc...) asparagine glycosylation. Residues Asn424, Asn531, Asn561, and Asn650 are each glycosylated (N-linked (GlcNAc...) asparagine). An intrachain disulfide couples Cys534 to Cys579. A helical membrane pass occupies residues 699–720 (LLALYFASSLVIPAIGMIIYFA). Over 721–739 (RKANMKGSYSLVEAQKSKV) the chain is Cytoplasmic.

As to quaternary structure, binds to ECMV-D capsid proteins and acts as a receptor for this virus. Cleaved by the metalloproteinase ADAM17 to generate the soluble form. Post-translationally, sialoglycoprotein. In terms of processing, ubiquitinated by TRIM65 via 'Lys-48'-linked ubiquitination; leading to proteasomal degradation. In terms of tissue distribution, expressed in aortic endothelial cells, with low expression in the descending thoracic aorta and the outer curvature of the aortic arch, where pulsatory shear stress exists, and high in the inner curvature of the aortic arch, where oscillatory shear stress prevails (at protein level). Expressed on inflamed vascular endothelium, as well as on macrophage-like and dendritic cell types in both normal and inflamed tissue.

It is found in the cell membrane. The protein resides in the secreted. Cell adhesion glycoprotein predominantly expressed on the surface of endothelial cells that plays an important role in immune surveillance and inflammation. Acts as a major regulator of leukocyte adhesion to the endothelium through interaction with different types of integrins. During inflammatory responses, binds ligands on the surface of activated endothelial cells to initiate the activation of calcium channels and the plasma membrane-associated small GTPase RAC1 leading to leukocyte transendothelial migration. Also serves as a quality-control checkpoint for entry into bone marrow by providing a 'don't-eat-me' stamping in the context of major histocompatibility complex (MHC) class-I presentation. The protein is Vascular cell adhesion protein 1 (Vcam1) of Rattus norvegicus (Rat).